The chain runs to 420 residues: D-tagatose-1,6-bisphosphate aldolase subunit GatZ (420 aa).

The protein belongs to the GatZ/KbaZ family. GatZ subfamily. As to quaternary structure, forms a complex with GatY.

It functions in the pathway carbohydrate metabolism; D-tagatose 6-phosphate degradation; D-glyceraldehyde 3-phosphate and glycerone phosphate from D-tagatose 6-phosphate: step 2/2. In terms of biological role, component of the tagatose-1,6-bisphosphate aldolase GatYZ that is required for full activity and stability of the Y subunit. Could have a chaperone-like function for the proper and stable folding of GatY. When expressed alone, GatZ does not show any aldolase activity. Is involved in the catabolism of galactitol. This Escherichia coli O9:H4 (strain HS) protein is D-tagatose-1,6-bisphosphate aldolase subunit GatZ.